We begin with the raw amino-acid sequence, 484 residues long: tRNA sulfurtransferase (484 aa).

The THUMP domain maps to 61-165 (TLLVELLGRI…NDKMMLIKAR (105 aa)). ATP is bound by residues 183-184 (LI), Lys-265, Gly-287, and Gln-296. A disulfide bridge links Cys-344 with Cys-456. Positions 404–484 (LSANEVILDI…DNVKVLNKIS (81 aa)) constitute a Rhodanese domain. Catalysis depends on Cys-456, which acts as the Cysteine persulfide intermediate.

This sequence belongs to the ThiI family.

It localises to the cytoplasm. It carries out the reaction [ThiI sulfur-carrier protein]-S-sulfanyl-L-cysteine + a uridine in tRNA + 2 reduced [2Fe-2S]-[ferredoxin] + ATP + H(+) = [ThiI sulfur-carrier protein]-L-cysteine + a 4-thiouridine in tRNA + 2 oxidized [2Fe-2S]-[ferredoxin] + AMP + diphosphate. It catalyses the reaction [ThiS sulfur-carrier protein]-C-terminal Gly-Gly-AMP + S-sulfanyl-L-cysteinyl-[cysteine desulfurase] + AH2 = [ThiS sulfur-carrier protein]-C-terminal-Gly-aminoethanethioate + L-cysteinyl-[cysteine desulfurase] + A + AMP + 2 H(+). It participates in cofactor biosynthesis; thiamine diphosphate biosynthesis. Catalyzes the ATP-dependent transfer of a sulfur to tRNA to produce 4-thiouridine in position 8 of tRNAs, which functions as a near-UV photosensor. Also catalyzes the transfer of sulfur to the sulfur carrier protein ThiS, forming ThiS-thiocarboxylate. This is a step in the synthesis of thiazole, in the thiamine biosynthesis pathway. The sulfur is donated as persulfide by IscS. The protein is tRNA sulfurtransferase of Histophilus somni (strain 2336) (Haemophilus somnus).